Here is a 217-residue protein sequence, read N- to C-terminus: ATP phosphoribosyltransferase (217 aa).

It belongs to the ATP phosphoribosyltransferase family. Short subfamily. In terms of assembly, heteromultimer composed of HisG and HisZ subunits.

The protein localises to the cytoplasm. The catalysed reaction is 1-(5-phospho-beta-D-ribosyl)-ATP + diphosphate = 5-phospho-alpha-D-ribose 1-diphosphate + ATP. Its pathway is amino-acid biosynthesis; L-histidine biosynthesis; L-histidine from 5-phospho-alpha-D-ribose 1-diphosphate: step 1/9. In terms of biological role, catalyzes the condensation of ATP and 5-phosphoribose 1-diphosphate to form N'-(5'-phosphoribosyl)-ATP (PR-ATP). Has a crucial role in the pathway because the rate of histidine biosynthesis seems to be controlled primarily by regulation of HisG enzymatic activity. In Burkholderia lata (strain ATCC 17760 / DSM 23089 / LMG 22485 / NCIMB 9086 / R18194 / 383), this protein is ATP phosphoribosyltransferase.